We begin with the raw amino-acid sequence, 391 residues long: Chorismate synthase (391 aa).

Arg48 contacts NADP(+). Residues 126–128, Gly286, 301–305, and Arg328 contribute to the FMN site; these read RAS and KPTSS.

This sequence belongs to the chorismate synthase family. Requires FMNH2 as cofactor.

The catalysed reaction is 5-O-(1-carboxyvinyl)-3-phosphoshikimate = chorismate + phosphate. It functions in the pathway metabolic intermediate biosynthesis; chorismate biosynthesis; chorismate from D-erythrose 4-phosphate and phosphoenolpyruvate: step 7/7. Its function is as follows. Catalyzes the anti-1,4-elimination of the C-3 phosphate and the C-6 proR hydrogen from 5-enolpyruvylshikimate-3-phosphate (EPSP) to yield chorismate, which is the branch point compound that serves as the starting substrate for the three terminal pathways of aromatic amino acid biosynthesis. This reaction introduces a second double bond into the aromatic ring system. The chain is Chorismate synthase from Saccharolobus solfataricus (strain ATCC 35092 / DSM 1617 / JCM 11322 / P2) (Sulfolobus solfataricus).